The following is a 340-amino-acid chain: Glucokinase (340 aa).

Position 17-22 (17-22) interacts with ATP; it reads GDIGGT.

This sequence belongs to the bacterial glucokinase family.

The protein localises to the cytoplasm. It carries out the reaction D-glucose + ATP = D-glucose 6-phosphate + ADP + H(+). In Agrobacterium fabrum (strain C58 / ATCC 33970) (Agrobacterium tumefaciens (strain C58)), this protein is Glucokinase.